The primary structure comprises 146 residues: Large ribosomal subunit protein uL13 (146 aa).

It belongs to the universal ribosomal protein uL13 family. Part of the 50S ribosomal subunit.

This protein is one of the early assembly proteins of the 50S ribosomal subunit, although it is not seen to bind rRNA by itself. It is important during the early stages of 50S assembly. The sequence is that of Large ribosomal subunit protein uL13 from Sulfurisphaera tokodaii (strain DSM 16993 / JCM 10545 / NBRC 100140 / 7) (Sulfolobus tokodaii).